The sequence spans 68 residues: Beta-defensin 1 (68 aa).

The signal sequence occupies residues 1–21 (MRTSYLLLFILCLVLCDMDSG). Positions 22-32 (DTFLTGLGHRS) are excised as a propeptide. 3 disulfides stabilise this stretch: cysteine 37/cysteine 66, cysteine 44/cysteine 59, and cysteine 49/cysteine 67.

It belongs to the beta-defensin family. Monomer. Homodimer.

Its subcellular location is the secreted. The protein localises to the membrane. In terms of biological role, has bactericidal activity. May act as a ligand for C-C chemokine receptor CCR6. Positively regulates the sperm motility and bactericidal activity in a CCR6-dependent manner. Binds to CCR6 and triggers Ca2+ mobilization in the sperm which is important for its motility. The protein is Beta-defensin 1 (DEFB1) of Saguinus oedipus (Cotton-top tamarin).